A 148-amino-acid polypeptide reads, in one-letter code: MAPRAEKKPAEKKTAAERPVEENKAAEKAPAEKKPKAGKKLPPKEAGDKKKKRSKKNVETYKIYIFKVLKQVHPDIGISSKAMGIMNSFINDIFEKLAQESSKLARYNKKPTITSREIQTAVRLVLPGELAKHAVSEGTKAVTKFTSS.

Residues 1 to 35 show a composition bias toward basic and acidic residues; that stretch reads MAPRAEKKPAEKKTAAERPVEENKAAEKAPAEKKP. The disordered stretch occupies residues 1 to 56; that stretch reads MAPRAEKKPAEKKTAAERPVEENKAAEKAPAEKKPKAGKKLPPKEAGDKKKKRSKK. Alanine 2 carries the n,N,N-trimethylalanine; alternate modification. A N,N-dimethylalanine; alternate modification is found at alanine 2. The residue at position 2 (alanine 2) is an N-methylalanine; alternate. N6-acetyllysine; partial is present on lysine 7. N6-acetyllysine is present on lysine 12. An N6,N6-dimethyllysine modification is found at lysine 13. 3 positions are modified to N6-acetyllysine: lysine 28, lysine 33, and lysine 39. At lysine 40 the chain carries N6-acetyllysine; partial. A Glycyl lysine isopeptide (Lys-Gly) (interchain with G-Cter in ubiquitin) cross-link involves residue lysine 144.

It belongs to the histone H2B family. The nucleosome is a histone octamer containing two molecules each of H2A, H2B, H3 and H4 assembled in one H3-H4 heterotetramer and two H2A-H2B heterodimers. The octamer wraps approximately 147 bp of DNA. Interacts with AHL27. Can be acetylated to form H2BK6ac, H2BK33ac and H2BK34ac. Post-translationally, mono-, di- or trimethylated at the N-terminus to form H2BA1me1/2/3. H2BA1me2 may be acetylated to form H2BA1me2K6ac. In terms of processing, monoubiquitinated by BRE1 to form H2BK143ub1 and deubiquitinated by UBP26. Required for heterochromatic histone H3 di- and trimethylation at H3K4me. May give a specific tag for epigenetic transcriptional activation.

It localises to the nucleus. The protein localises to the chromosome. Core component of nucleosome. Nucleosomes wrap and compact DNA into chromatin, limiting DNA accessibility to the cellular machineries which require DNA as a template. Histones thereby play a central role in transcription regulation, DNA repair, DNA replication and chromosomal stability. DNA accessibility is regulated via a complex set of post-translational modifications of histones, also called histone code, and nucleosome remodeling. The sequence is that of Histone H2B.1 from Arabidopsis thaliana (Mouse-ear cress).